Consider the following 349-residue polypeptide: tRNA pseudouridine synthase D (349 aa).

Phe-27 is a binding site for substrate. Catalysis depends on Asp-80, which acts as the Nucleophile. Asn-129 is a binding site for substrate. Residues 155-303 form the TRUD domain; that stretch reads GVPNYFGAQR…VEAARRAMLL (149 aa). Phe-329 contributes to the substrate binding site.

This sequence belongs to the pseudouridine synthase TruD family.

The enzyme catalyses uridine(13) in tRNA = pseudouridine(13) in tRNA. In terms of biological role, responsible for synthesis of pseudouridine from uracil-13 in transfer RNAs. In Klebsiella pneumoniae (strain 342), this protein is tRNA pseudouridine synthase D.